The sequence spans 270 residues: Diaminopimelate epimerase (270 aa).

The substrate site is built by Asn15, Gln49, and Asn66. Cys75 (proton donor) is an active-site residue. Substrate is bound by residues 76 to 77 (GN), Asn155, Asn187, and 204 to 205 (ER). The active-site Proton acceptor is Cys213. 214–215 (GS) is a substrate binding site.

This sequence belongs to the diaminopimelate epimerase family. As to quaternary structure, homodimer.

Its subcellular location is the cytoplasm. The enzyme catalyses (2S,6S)-2,6-diaminopimelate = meso-2,6-diaminopimelate. It functions in the pathway amino-acid biosynthesis; L-lysine biosynthesis via DAP pathway; DL-2,6-diaminopimelate from LL-2,6-diaminopimelate: step 1/1. Functionally, catalyzes the stereoinversion of LL-2,6-diaminopimelate (L,L-DAP) to meso-diaminopimelate (meso-DAP), a precursor of L-lysine and an essential component of the bacterial peptidoglycan. This chain is Diaminopimelate epimerase, found in Rickettsia felis (strain ATCC VR-1525 / URRWXCal2) (Rickettsia azadi).